An 810-amino-acid chain; its full sequence is Phospholipase D alpha 1 (810 aa).

Positions 1-126 (MAQHLLHGTL…INGEEVDQWV (126 aa)) constitute a C2 domain. Asp-187 contacts Ca(2+). The 40-residue stretch at 327–366 (TMFTHHQKIVVVDSEMPSRGGSEMRRIVSFVGGIDLCDGR) folds into the PLD phosphodiesterase 1 domain. Active-site residues include His-332, Lys-334, and Asp-339. His-332 provides a ligand contact to a 1,2-diacyl-sn-glycero-3-phosphate. The Ca(2+) site is built by His-372 and His-406. Residues Gln-522 and His-661 each contribute to the a 1,2-diacyl-sn-glycero-3-phosphate site. The PLD phosphodiesterase 2 domain occupies 656–683 (FMIYVHTKMMIVDDEYIIIGSANINQRS). Catalysis depends on residues His-661, Lys-663, and Asp-668. Glu-722 contributes to the Ca(2+) binding site.

It belongs to the phospholipase D family. C2-PLD subfamily. As to quaternary structure, interacts with GPA1. This binding inhibits PLDALPHA1 activity and is relieved by GTP. Ca(2+) is required as a cofactor. Highly expressed in roots, stems and flowers, moderately in leaves, seedlings and siliques. Not detected in seeds.

It is found in the cytoplasm. The protein localises to the cell membrane. The protein resides in the mitochondrion membrane. It localises to the microsome membrane. Its subcellular location is the vacuole. It is found in the cytoplasmic vesicle. The protein localises to the clathrin-coated vesicle. It catalyses the reaction a 1,2-diacyl-sn-glycero-3-phosphocholine + H2O = a 1,2-diacyl-sn-glycero-3-phosphate + choline + H(+). With respect to regulation, not inhibited by neomycin. Its function is as follows. Hydrolyzes glycerol-phospholipids at the terminal phosphodiesteric bond to generate phosphatidic acids (PA). Plays an important role in various cellular processes, including phytohormone action and response to stress, characterized by acidification of the cell. Involved in wound induction of jasmonic acid. May be involved in membrane lipid remodeling. Probably involved in freezing tolerance by modulating the cold-responsive genes and accumulation of osmolytes. Can use phosphatidylcholine (PC), phosphatidylethanolamine (PE) and phosphatidylglycerol (PG) as substrates, both in presence or in absence of PIP2. Its main substrate is phosphatidylcholine. Stimulates the intrinsic GTPase activity of GPA1 upon binding. Mediates the abscisic acid effects on stomata through interaction with GPA1 and the production of phosphatidic acid that bind to ABI1. Involved in seed aging and deterioration. Involved in microtubule stabilization and salt tolerance. Involved in abscisic acid-induced stomatal closure. In Arabidopsis thaliana (Mouse-ear cress), this protein is Phospholipase D alpha 1.